We begin with the raw amino-acid sequence, 551 residues long: Protein GPR107 (551 aa).

The N-terminal stretch at 1–33 (MAVPVPLGRFGSFCLRLLRLLALLELLVHPVLG) is a signal peptide. The Extracellular segment spans residues 40–262 (LKDDVRHKVH…YLSAGEIPLP (223 aa)). N-linked (GlcNAc...) asparagine glycosylation is found at Asn64 and Asn209. An intrachain disulfide couples Cys106 to Cys226. The helical transmembrane segment at 263–283 (KLYVSMALFFFLSGTIWIHIL) threads the bilayer. At 284-292 (RKRRNDVFK) the chain is on the cytoplasmic side. A helical membrane pass occupies residues 293-313 (IHWLMAALPFTKSLSLVFHAI). Residues 314–336 (DYHYISSQGFPIEGWAVVYYITH) are Extracellular-facing. The helical transmembrane segment at 337–357 (LLKGALLFITIALIGTGWAFI) threads the bilayer. Over 358–367 (KHILSDKDKK) the chain is Cytoplasmic. Residues 368 to 388 (IFMIVIPLQVLANVAYIIIES) form a helical membrane-spanning segment. Over 389–401 (TEEGTTEYGLWKD) the chain is Extracellular. The chain crosses the membrane as a helical span at residues 402–422 (SLFLVDLLCCGAILFPVVWSI). Residues 423 to 449 (RHLQEASATDGKAAINLAKLRLFRHYY) are Cytoplasmic-facing. The helical transmembrane segment at 450–470 (VLIVCYIYFTRIIAFLLKFAV) threads the bilayer. Topologically, residues 471–475 (PFQWK) are extracellular. A helical membrane pass occupies residues 476–495 (WLYQLLDETATLVFFVLTGY). Residues 496-551 (KFRPASDNPYLQLSQEDDDLEMESVVTTSGVMENMKKVKKVSNGAVEPQGSWEGTA) are Cytoplasmic-facing. The residue at position 537 (Ser537) is a Phosphoserine.

This sequence belongs to the LU7TM family. Cleaved by FURIN to yield two fragments that remain associated via a disulfide bond.

It localises to the cell membrane. The protein localises to the golgi apparatus. The protein resides in the trans-Golgi network membrane. Has been proposed to act as a receptor for neuronostatin, a peptide derived from the somatostatin/SST precursor. Involved in blood sugar regulation through the induction of glucagon in response to low glucose. The protein is Protein GPR107 (Gpr107) of Mus musculus (Mouse).